The primary structure comprises 150 residues: Allograft inflammatory factor 1-like (150 aa).

N-acetylserine is present on Ser-2. Position 2 is a phosphoserine (Ser-2). An EF-hand 1 domain is found at 47-82 (EKLTAFKEKYMEFDLNNEGEIDLMSLKRMMEKLGVP). Asp-60, Asn-62, Glu-64, and Glu-66 together coordinate Ca(2+). In terms of domain architecture, EF-hand 2; degenerate spans 83–117 (KTHLEMKKMISEVTGGVSDTISYRDFVNMMLGKRS). A disordered region spans residues 129-150 (KANESSPKPVGPPPERDIASLP). Ser-134 is subject to Phosphoserine.

Homodimer (Potential). Monomer.

Its subcellular location is the cytoplasm. It localises to the cytoskeleton. The protein localises to the cell projection. It is found in the ruffle membrane. Its function is as follows. Actin-binding protein that promotes actin bundling. May neither bind calcium nor depend on calcium for function. In Homo sapiens (Human), this protein is Allograft inflammatory factor 1-like (AIF1L).